We begin with the raw amino-acid sequence, 207 residues long: Small ribosomal subunit protein uS4c (207 aa).

The tract at residues 20–52 (GFSKKIDRNHTPPGQHGWKKKASDQKKSKESQY) is disordered. Positions 40–52 (KASDQKKSKESQY) are enriched in basic and acidic residues. In terms of domain architecture, S4 RNA-binding spans 97–158 (MRLDNIIYRL…NSQQLIKNYL (62 aa)).

Belongs to the universal ribosomal protein uS4 family. As to quaternary structure, part of the 30S ribosomal subunit. Contacts protein S5. The interaction surface between S4 and S5 is involved in control of translational fidelity.

The protein localises to the plastid. One of the primary rRNA binding proteins, it binds directly to 16S rRNA where it nucleates assembly of the body of the 30S subunit. In terms of biological role, with S5 and S12 plays an important role in translational accuracy. The chain is Small ribosomal subunit protein uS4c (rps4) from Prototheca wickerhamii.